The primary structure comprises 233 residues: ATP synthase subunit a 2 (233 aa).

5 helical membrane passes run 15 to 35 (FVVI…LVIG), 78 to 98 (YLAF…LTVV), 107 to 127 (SLST…IYGI), 169 to 189 (IMSG…FVPV), and 194 to 214 (LGLV…LVYI).

The protein belongs to the ATPase A chain family. In terms of assembly, F-type ATPases have 2 components, CF(1) - the catalytic core - and CF(0) - the membrane proton channel. CF(1) has five subunits: alpha(3), beta(3), gamma(1), delta(1), epsilon(1). CF(0) has four main subunits: a, b, b' and c.

It is found in the cellular thylakoid membrane. In terms of biological role, key component of the proton channel; it plays a direct role in the translocation of protons across the membrane. This is ATP synthase subunit a 2 from Picosynechococcus sp. (strain ATCC 27264 / PCC 7002 / PR-6) (Agmenellum quadruplicatum).